We begin with the raw amino-acid sequence, 213 residues long: Motile sperm domain-containing protein 1 (213 aa).

Residues 16–143 (PVFVFPTELI…KEHLTESLFF (128 aa)) form the MSP domain. Helical transmembrane passes span 159 to 179 (SLLT…PTLG) and 191 to 211 (LSVN…MAIF). A Nuclear export signal motif is present at residues 205 to 208 (LITM).

Its subcellular location is the endoplasmic reticulum membrane. It localises to the golgi apparatus membrane. Plays a role in differentiation and/or proliferation of mesenchymal stem cells. Proposed to be involved in epithelial-to-mesenchymal transition (EMT). However, another study suggests that it is not required for EMT or stem cell self-renewal and acts during later stages of differentiation. This Bos taurus (Bovine) protein is Motile sperm domain-containing protein 1 (MOSPD1).